A 203-amino-acid polypeptide reads, in one-letter code: Dephospho-CoA kinase (203 aa).

In terms of domain architecture, DPCK spans 3 to 201 (SVGLTGGIGS…QRYLECAAAA (199 aa)). 11-16 (GSGKTT) is a binding site for ATP.

Belongs to the CoaE family.

It localises to the cytoplasm. It catalyses the reaction 3'-dephospho-CoA + ATP = ADP + CoA + H(+). It participates in cofactor biosynthesis; coenzyme A biosynthesis; CoA from (R)-pantothenate: step 5/5. In terms of biological role, catalyzes the phosphorylation of the 3'-hydroxyl group of dephosphocoenzyme A to form coenzyme A. The sequence is that of Dephospho-CoA kinase from Burkholderia pseudomallei (strain 1710b).